A 357-amino-acid polypeptide reads, in one-letter code: Embryonic growth/differentiation factor 1 (357 aa).

A signal peptide spans 1 to 23 (MLPVCHRFCDHLLLLLLLPSTTL). A propeptide spanning residues 24–237 (APAPASMGPA…RLCPLPRLRR (214 aa)) is cleaved from the precursor. Residue N191 is glycosylated (N-linked (GlcNAc...) asparagine). 3 disulfides stabilise this stretch: C251–C322, C280–C354, and C284–C356.

This sequence belongs to the TGF-beta family. Homodimer; disulfide-linked. As to expression, expressed almost exclusively in the nervous system.

It is found in the secreted. May mediate cell differentiation events during embryonic development. The sequence is that of Embryonic growth/differentiation factor 1 (Gdf1) from Mus musculus (Mouse).